Here is a 61-residue protein sequence, read N- to C-terminus: Small ribosomal subunit protein uS14 (61 aa).

Zn(2+) is bound by residues C24, C27, C40, and C43.

The protein belongs to the universal ribosomal protein uS14 family. Zinc-binding uS14 subfamily. Part of the 30S ribosomal subunit. Contacts proteins S3 and S10. Requires Zn(2+) as cofactor.

Binds 16S rRNA, required for the assembly of 30S particles and may also be responsible for determining the conformation of the 16S rRNA at the A site. This Thermobifida fusca (strain YX) protein is Small ribosomal subunit protein uS14.